The chain runs to 292 residues: uncharacterized protein (292 aa).

10 helical membrane passes run 6–26, 32–52, 68–88, 94–114, 123–143, 147–167, 182–202, 214–234, 242–262, and 265–285; these read LGII…KVGI, LLFS…ILFI, IIMS…GMQF, TSVL…FSLN, MGLV…MLNI, ALFG…ANVF, AWHL…FEAV, SLLF…FWVL, ASMA…LQLH, and ITIN…MNTF. 2 consecutive EamA domains span residues 13 to 137 and 159 to 285; these read LIWG…FIFG and LSWG…MNTF.

Belongs to the EamA transporter family.

Its subcellular location is the cell membrane. This is an uncharacterized protein from Bacillus subtilis (strain 168).